The sequence spans 180 residues: Large ribosomal subunit protein uL5 (180 aa).

This sequence belongs to the universal ribosomal protein uL5 family. As to quaternary structure, part of the 50S ribosomal subunit; part of the 5S rRNA/L5/L18/L25 subcomplex. Contacts the 5S rRNA and the P site tRNA. Forms a bridge to the 30S subunit in the 70S ribosome.

This is one of the proteins that bind and probably mediate the attachment of the 5S RNA into the large ribosomal subunit, where it forms part of the central protuberance. In the 70S ribosome it contacts protein S13 of the 30S subunit (bridge B1b), connecting the 2 subunits; this bridge is implicated in subunit movement. Contacts the P site tRNA; the 5S rRNA and some of its associated proteins might help stabilize positioning of ribosome-bound tRNAs. This Ligilactobacillus salivarius (strain UCC118) (Lactobacillus salivarius) protein is Large ribosomal subunit protein uL5.